The following is a 168-amino-acid chain: MKIAIYPGSFDPVTNGHIDIIQRGRHLFDKIIVSILLNPGKKALFSLDERLDMLTESLKDIDGVEVDSFAGLLIDYAERKNAKAILRGMRAVSDFEYEFQMALMNRRLNRDIQTVFLMTGMRWIYTSSSIIKEAATFGGDISGMVPAIVEKKLEEKIGYVVNHKKAED.

Ser-9 provides a ligand contact to substrate. Residues 9 to 10 and His-17 contribute to the ATP site; that span reads SF. Residues Lys-41, Leu-73, and Arg-87 each coordinate substrate. Residues 88–90, Glu-98, and 123–129 contribute to the ATP site; these read GMR and WIYTSSS.

It belongs to the bacterial CoaD family. Homohexamer. Mg(2+) serves as cofactor.

The protein resides in the cytoplasm. The catalysed reaction is (R)-4'-phosphopantetheine + ATP + H(+) = 3'-dephospho-CoA + diphosphate. It participates in cofactor biosynthesis; coenzyme A biosynthesis; CoA from (R)-pantothenate: step 4/5. Reversibly transfers an adenylyl group from ATP to 4'-phosphopantetheine, yielding dephospho-CoA (dPCoA) and pyrophosphate. This is Phosphopantetheine adenylyltransferase from Desulfosudis oleivorans (strain DSM 6200 / JCM 39069 / Hxd3) (Desulfococcus oleovorans).